Here is a 266-residue protein sequence, read N- to C-terminus: Zinc transporter ZupT (266 aa).

Helical transmembrane passes span 8 to 28 (LLLT…ALVV), 35 to 55 (FLTL…FVEL), 70 to 90 (QAAA…IWAI), 123 to 143 (GLFT…AVFF), 152 to 172 (GIVI…AIAV), 185 to 205 (FTYS…GFAI), 209 to 229 (WLSP…MVYI), and 246 to 266 (LAIS…LLLA). Fe(2+) is bound by residues Asn134 and Glu137. Zn(2+) contacts are provided by Glu137 and His162. Positions 163, 166, and 195 each coordinate Fe(2+). A Zn(2+)-binding site is contributed by Glu166.

This sequence belongs to the ZIP transporter (TC 2.A.5) family. ZupT subfamily.

It localises to the cell membrane. The catalysed reaction is Zn(2+)(in) = Zn(2+)(out). Its function is as follows. Mediates zinc uptake. May also transport other divalent cations. This Chlorobium phaeovibrioides (strain DSM 265 / 1930) (Prosthecochloris vibrioformis (strain DSM 265)) protein is Zinc transporter ZupT.